Consider the following 520-residue polypeptide: Chaperone Ric-8B (520 aa).

A Phosphoserine modification is found at Ser-468. Position 473 is a phosphothreonine (Thr-473).

It belongs to the synembryn family. Interacts with GDP-bound G(s) G-alpha proteins GNAL and GNAS. Does not interact with G-alpha proteins when they are in complex with subunits beta and gamma. In terms of tissue distribution, predominantly expressed in the mature olfactory sensory neurons and also in a few regions in the brain.

The protein resides in the cytoplasm. It localises to the cell cortex. Functionally, chaperone that specifically binds and folds nascent G(s) G-alpha proteins (GNAS and GNAL) prior to G protein heterotrimer formation, promoting their association with the plasma membrane. Also acts as a guanine nucleotide exchange factor (GEF) for G(s) proteins by stimulating exchange of bound GDP for free GTP. Acts as an important component for odorant signal transduction by mediating GNAL (G(olf)-alpha) folding, thereby promoting-dependent cAMP accumulation in olfactory sensory neurons. This Mus musculus (Mouse) protein is Chaperone Ric-8B.